The sequence spans 693 residues: Elongation factor G (693 aa).

Residues 8-284 form the tr-type G domain; the sequence is HMVRNIGIAA…AVIDYLPAPD (277 aa). Residues 17 to 24, 81 to 85, and 135 to 138 each bind GTP; these read AHIDAGKT, DTPGH, and NKMD.

Belongs to the TRAFAC class translation factor GTPase superfamily. Classic translation factor GTPase family. EF-G/EF-2 subfamily.

The protein resides in the cytoplasm. Functionally, catalyzes the GTP-dependent ribosomal translocation step during translation elongation. During this step, the ribosome changes from the pre-translocational (PRE) to the post-translocational (POST) state as the newly formed A-site-bound peptidyl-tRNA and P-site-bound deacylated tRNA move to the P and E sites, respectively. Catalyzes the coordinated movement of the two tRNA molecules, the mRNA and conformational changes in the ribosome. The protein is Elongation factor G of Nautilia profundicola (strain ATCC BAA-1463 / DSM 18972 / AmH).